We begin with the raw amino-acid sequence, 589 residues long: Cell fusion protein aff-1 (589 aa).

The first 20 residues, 1 to 20 (MRLWQWSIAVAICLVMVTEA), serve as a signal peptide directing secretion. The Extracellular portion of the chain corresponds to 21–537 (RLRRHHRKRR…MAHGGDFTEW (517 aa)). N-linked (GlcNAc...) asparagine glycans are attached at residues Asn-58, Asn-138, Asn-205, Asn-335, Asn-382, Asn-392, and Asn-408. Residues 538–558 (LKIGIHIVIAVGLLLLLILLF) form a helical membrane-spanning segment. The Cytoplasmic portion of the chain corresponds to 559 to 589 (TKCLVPLACCSLSIPFKNRNKKKKKKNSSDY).

Belongs to the EFF/AFF cell fusogen family. In terms of tissue distribution, expressed in amphid sheath cells.

It localises to the cell membrane. The protein resides in the apical cell membrane. In terms of biological role, required for cell fusion events during development including the fusion of anchor cells (AC), vulval A and vulval D rings, and late epidermal seam cells. Required for amphid sheath cell fusion induced by entry into dauer stage. The sequence is that of Cell fusion protein aff-1 from Caenorhabditis elegans.